The chain runs to 130 residues: Holo-[acyl-carrier-protein] synthase (130 aa).

Aspartate 8 and glutamate 62 together coordinate Mg(2+).

It belongs to the P-Pant transferase superfamily. AcpS family. Mg(2+) serves as cofactor.

It is found in the cytoplasm. It carries out the reaction apo-[ACP] + CoA = holo-[ACP] + adenosine 3',5'-bisphosphate + H(+). Its function is as follows. Transfers the 4'-phosphopantetheine moiety from coenzyme A to a Ser of acyl-carrier-protein. This Variovorax paradoxus (strain S110) protein is Holo-[acyl-carrier-protein] synthase.